The primary structure comprises 510 residues: Maturase K (510 aa).

It belongs to the intron maturase 2 family. MatK subfamily.

It localises to the plastid. The protein resides in the chloroplast. In terms of biological role, usually encoded in the trnK tRNA gene intron. Probably assists in splicing its own and other chloroplast group II introns. This Spirodela intermedia (Intermediate duckweed) protein is Maturase K.